The sequence spans 325 residues: Acetyl-coenzyme A carboxylase carboxyl transferase subunit alpha (325 aa).

The CoA carboxyltransferase C-terminal domain occupies 35–292; sequence EINKLEARLE…DDVLKRSLRE (258 aa).

Belongs to the AccA family. Acetyl-CoA carboxylase is a heterohexamer composed of biotin carboxyl carrier protein (AccB), biotin carboxylase (AccC) and two subunits each of ACCase subunit alpha (AccA) and ACCase subunit beta (AccD).

Its subcellular location is the cytoplasm. It catalyses the reaction N(6)-carboxybiotinyl-L-lysyl-[protein] + acetyl-CoA = N(6)-biotinyl-L-lysyl-[protein] + malonyl-CoA. The protein operates within lipid metabolism; malonyl-CoA biosynthesis; malonyl-CoA from acetyl-CoA: step 1/1. Functionally, component of the acetyl coenzyme A carboxylase (ACC) complex. First, biotin carboxylase catalyzes the carboxylation of biotin on its carrier protein (BCCP) and then the CO(2) group is transferred by the carboxyltransferase to acetyl-CoA to form malonyl-CoA. The polypeptide is Acetyl-coenzyme A carboxylase carboxyl transferase subunit alpha (Anoxybacillus flavithermus (strain DSM 21510 / WK1)).